The sequence spans 179 residues: Lebocin-4 (179 aa).

The N-terminal stretch at 1–16 (MYKFLVFSSVLVLFFA) is a signal peptide. The propeptide occupies 17–120 (QASCQRFIQP…RPIESHRNTR (104 aa)). T135 carries O-linked (GalNAc...) threonine glycosylation. A propeptide spanning residues 153–179 (RRHASDDQEELRHHNEHFLIPRDILQD) is cleaved from the precursor.

The protein belongs to the lebocin family. In terms of processing, O-glycosylation is important for the antibacterial activity of lebocin. In terms of tissue distribution, hemolymph. Produced in fat body.

The protein localises to the secreted. Its function is as follows. Antibacterial peptide. This Bombyx mori (Silk moth) protein is Lebocin-4 (LEB4).